Consider the following 232-residue polypeptide: 2-C-methyl-D-erythritol 4-phosphate cytidylyltransferase (232 aa).

The protein belongs to the IspD/TarI cytidylyltransferase family. IspD subfamily.

It carries out the reaction 2-C-methyl-D-erythritol 4-phosphate + CTP + H(+) = 4-CDP-2-C-methyl-D-erythritol + diphosphate. Its pathway is isoprenoid biosynthesis; isopentenyl diphosphate biosynthesis via DXP pathway; isopentenyl diphosphate from 1-deoxy-D-xylulose 5-phosphate: step 2/6. Catalyzes the formation of 4-diphosphocytidyl-2-C-methyl-D-erythritol from CTP and 2-C-methyl-D-erythritol 4-phosphate (MEP). The protein is 2-C-methyl-D-erythritol 4-phosphate cytidylyltransferase of Stenotrophomonas maltophilia (strain K279a).